The chain runs to 923 residues: Immunomodulating metalloprotease (923 aa).

The N-terminal stretch at 1–41 is a signal peptide; the sequence is MSLSTTAFPSLQGENMSRSPIPRHRALLAGFCLAGALSAQA. Residues 450 to 794 form the Peptidase M60 domain; that stretch reads QGFTAIGRMA…FYTQWVHYWA (345 aa). Residue His696 participates in Zn(2+) binding. Residue Glu697 is part of the active site. His700 lines the Zn(2+) pocket.

It belongs to the peptidase M88 family. Zn(2+) is required as a cofactor.

Its subcellular location is the secreted. Proteolytic activity is blocked in the presence of EDTA. Protease that degrades several proteins of the host immune system. Cleaves P-selectin glycoprotein ligand-1 (PSGL-1), leading to its functional inhibition; PSGL-1 is a leukocyte cell-surface receptor essential for leukocyte recruitment to the site of infection. Next to PSGL-1, targets host CD43 and CD44 that are also involved in leukocyte homing. Thus, prevents neutrophil extravasation and thereby protects P.aeruginosa from neutrophil attack. Is also able to inhibit the decay accelerating factor (CD55), but not the cell-surface receptors CD46 and CD31. The polypeptide is Immunomodulating metalloprotease (Pseudomonas aeruginosa (strain ATCC 15692 / DSM 22644 / CIP 104116 / JCM 14847 / LMG 12228 / 1C / PRS 101 / PAO1)).